A 354-amino-acid chain; its full sequence is WASH complex subunit 3 (354 aa).

The segment at 76–354 (SSANVPVHNT…DDDDDDDESW (279 aa)) is disordered. A compositionally biased stretch (pro residues) spans 107-143 (IPPPPPPPPPPMTGVPPPPPPPPPPPISKSNIPPPPA). Positions 150–159 (ESDDDDEDNN) are enriched in acidic residues. Residues 213 to 244 (PQPPQPQPQSPSPQPPPPPTTTSSIPVPPPPF) show a composition bias toward pro residues. Positions 251-260 (SDDDDDDDEG) are enriched in acidic residues. Low complexity predominate over residues 277–290 (NNNSNSNSYSNNNN). 2 stretches are compositionally biased toward acidic residues: residues 293 to 307 (DDDD…DDDN) and 342 to 354 (DADD…DESW).

It belongs to the CCDC53 family. Probable component of the WASH complex.

The sequence is that of WASH complex subunit 3 from Dictyostelium discoideum (Social amoeba).